A 253-amino-acid polypeptide reads, in one-letter code: Hydroxyacylglutathione hydrolase (253 aa).

Positions 59, 61, 63, 64, 118, 143, and 181 each coordinate Zn(2+).

Belongs to the metallo-beta-lactamase superfamily. Glyoxalase II family. As to quaternary structure, monomer. Zn(2+) serves as cofactor.

It catalyses the reaction an S-(2-hydroxyacyl)glutathione + H2O = a 2-hydroxy carboxylate + glutathione + H(+). Its pathway is secondary metabolite metabolism; methylglyoxal degradation; (R)-lactate from methylglyoxal: step 2/2. In terms of biological role, thiolesterase that catalyzes the hydrolysis of S-D-lactoyl-glutathione to form glutathione and D-lactic acid. The chain is Hydroxyacylglutathione hydrolase from Prochlorococcus marinus (strain SARG / CCMP1375 / SS120).